We begin with the raw amino-acid sequence, 474 residues long: Calcitonin receptor (474 aa).

The N-terminal stretch at 1 to 24 (MRFTFTSRCLALFLLLNHPTPILP) is a signal peptide. Residues 25–146 (AFSNQTYPTI…FTPEKLKNAY (122 aa)) are Extracellular-facing. N-linked (GlcNAc...) asparagine glycosylation is found at asparagine 28, asparagine 73, asparagine 125, and asparagine 130. Intrachain disulfides connect cysteine 55–cysteine 81, cysteine 72–cysteine 112, and cysteine 95–cysteine 134. A helical membrane pass occupies residues 147-169 (VLYYLAIVGHSLSIFTLVISLGI). The Cytoplasmic portion of the chain corresponds to 170-181 (FVFFRSLGCQRV). Residues 182-202 (TLHKNMFLTYILNSMIIIIHL) form a helical membrane-spanning segment. The Extracellular portion of the chain corresponds to 203-219 (VEVVPNGELVRRDPVSC). A disulfide bridge connects residues cysteine 219 and cysteine 289. A helical membrane pass occupies residues 220–242 (KILHFFHQYMMACNYFWMLCEGI). Residues 243-259 (YLHTLIVVAVFTEKQRL) are Cytoplasmic-facing. The chain crosses the membrane as a helical span at residues 260 to 280 (RWYYLLGWGFPLVPTTIHAIT). Residues 281–296 (RAVYFNDNCWLSVETH) lie on the Extracellular side of the membrane. The helical transmembrane segment at 297–320 (LLYIIHGPVMAALVVNFFFLLNIV) threads the bilayer. Residues 321-340 (RVLVTKMRETHEAESHMYLK) are Cytoplasmic-facing. The chain crosses the membrane as a helical span at residues 341–359 (AVKATMILVPLLGIQFVVF). At 360-367 (PWRPSNKM) the chain is on the extracellular side. A helical membrane pass occupies residues 368–394 (LGKIYDYVMHSLIHFQGFFVATIYCFC). At 395–474 (NNEVQTTVKR…LNIIEQESSA (80 aa)) the chain is on the cytoplasmic side.

This sequence belongs to the G-protein coupled receptor 2 family. As to quaternary structure, heterodimer of CALCR and RAMP1, RAMP2 or RAMP3; the receptor complexes function as AMYR1, AMYR2 and AMYR3 receptors, respectively, and respond to amylin/IAPP, calcitonin/CT and CGRP1 ligands. Interacts with GPRASP2.

It is found in the cell membrane. With respect to regulation, sensitive to cholera toxin. Functionally, g protein-coupled receptor activated by ligand peptides amylin (IAPP), calcitonin (CT/CALCA) and calcitonin gene-related peptide type 1 (CGRP1/CALCA). CALCR interacts with receptor-activity-modifying proteins RAMP1, 2 and 3 to form receptor complexes AMYR1, 2 and 3, respectively. IAPP, CT and CGRP1 activate CALCR and AMYRs with distinct modes of receptor activation resulting in specific phenotypes. Ligand binding causes a conformation change that triggers signaling via guanine nucleotide-binding proteins (G proteins) and modulates the activity of downstream effectors. Activates cAMP-dependent pathway. Its function is as follows. Non-functional protein. Unable to couple to G proteins and activate adenylyl cyclase. Does not undergo receptor internalization following ligand binding. The polypeptide is Calcitonin receptor (Homo sapiens (Human)).